A 684-amino-acid chain; its full sequence is Methionine--tRNA ligase (684 aa).

Positions 17–27 (PYANGKAHVGH) match the 'HIGH' region motif. The Zn(2+) site is built by Cys148, Cys151, Cys160, and Cys164. The 'KMSKS' region motif lies at 330 to 334 (TFSKS). Lys333 is an ATP binding site. The 103-residue stretch at 582-684 (DFSKLDIRIG…KETNPGTCIH (103 aa)) folds into the tRNA-binding domain.

Belongs to the class-I aminoacyl-tRNA synthetase family. MetG type 1 subfamily. As to quaternary structure, homodimer. The cofactor is Zn(2+).

It localises to the cytoplasm. It carries out the reaction tRNA(Met) + L-methionine + ATP = L-methionyl-tRNA(Met) + AMP + diphosphate. Functionally, is required not only for elongation of protein synthesis but also for the initiation of all mRNA translation through initiator tRNA(fMet) aminoacylation. The polypeptide is Methionine--tRNA ligase (Methanococcoides burtonii (strain DSM 6242 / NBRC 107633 / OCM 468 / ACE-M)).